Reading from the N-terminus, the 523-residue chain is uncharacterized protein (523 aa).

A Radical SAM core domain is found at Arg-193–Arg-447. [4Fe-4S] cluster is bound by residues Cys-212, Cys-220, and Cys-223.

The cofactor is [4Fe-4S] cluster.

This is an uncharacterized protein from Methanopyrus kandleri (strain AV19 / DSM 6324 / JCM 9639 / NBRC 100938).